The primary structure comprises 315 residues: Acetyl-coenzyme A carboxylase carboxyl transferase subunit alpha (315 aa).

A CoA carboxyltransferase C-terminal domain is found at 38–292 (RLQKKSNELT…KLRLKEDLAE (255 aa)).

The protein belongs to the AccA family. In terms of assembly, acetyl-CoA carboxylase is a heterohexamer composed of biotin carboxyl carrier protein (AccB), biotin carboxylase (AccC) and two subunits each of ACCase subunit alpha (AccA) and ACCase subunit beta (AccD).

It is found in the cytoplasm. It carries out the reaction N(6)-carboxybiotinyl-L-lysyl-[protein] + acetyl-CoA = N(6)-biotinyl-L-lysyl-[protein] + malonyl-CoA. The protein operates within lipid metabolism; malonyl-CoA biosynthesis; malonyl-CoA from acetyl-CoA: step 1/1. In terms of biological role, component of the acetyl coenzyme A carboxylase (ACC) complex. First, biotin carboxylase catalyzes the carboxylation of biotin on its carrier protein (BCCP) and then the CO(2) group is transferred by the carboxyltransferase to acetyl-CoA to form malonyl-CoA. This is Acetyl-coenzyme A carboxylase carboxyl transferase subunit alpha from Haemophilus influenzae (strain PittEE).